The primary structure comprises 626 residues: Chaperone protein HtpG (626 aa).

Positions 1–331 (MSETVERHEF…TDDLPLNVSR (331 aa)) are a; substrate-binding. Positions 332-544 (EMLQSTPTLQ…GMGPDLQMQR (213 aa)) are b. The segment at 545 to 626 (LLRRAGRGFG…GTAAKPAESA (82 aa)) is c.

Belongs to the heat shock protein 90 family. Homodimer.

The protein resides in the cytoplasm. Its function is as follows. Molecular chaperone. Has ATPase activity. The sequence is that of Chaperone protein HtpG from Methylorubrum extorquens (strain PA1) (Methylobacterium extorquens).